The chain runs to 414 residues: CCA-adding enzyme (414 aa).

Residues Gly-8 and Arg-11 each coordinate ATP. The CTP site is built by Gly-8 and Arg-11. Mg(2+)-binding residues include Asp-21 and Asp-23. Residues Arg-92, Arg-138, and Arg-141 each coordinate ATP. Positions 92, 138, and 141 each coordinate CTP.

Belongs to the tRNA nucleotidyltransferase/poly(A) polymerase family. Bacterial CCA-adding enzyme type 2 subfamily. Requires Mg(2+) as cofactor.

The enzyme catalyses a tRNA precursor + 2 CTP + ATP = a tRNA with a 3' CCA end + 3 diphosphate. It catalyses the reaction a tRNA with a 3' CCA end + 2 CTP + ATP = a tRNA with a 3' CCACCA end + 3 diphosphate. In terms of biological role, catalyzes the addition and repair of the essential 3'-terminal CCA sequence in tRNAs without using a nucleic acid template. Adds these three nucleotides in the order of C, C, and A to the tRNA nucleotide-73, using CTP and ATP as substrates and producing inorganic pyrophosphate. tRNA 3'-terminal CCA addition is required both for tRNA processing and repair. Also involved in tRNA surveillance by mediating tandem CCA addition to generate a CCACCA at the 3' terminus of unstable tRNAs. While stable tRNAs receive only 3'-terminal CCA, unstable tRNAs are marked with CCACCA and rapidly degraded. The sequence is that of CCA-adding enzyme from Buchnera aphidicola subsp. Cinara cedri (strain Cc).